We begin with the raw amino-acid sequence, 101 residues long: NADH-quinone oxidoreductase subunit K (101 aa).

The next 3 membrane-spanning stretches (helical) occupy residues 4–24 (LTHY…GIFL), 30–50 (IVLL…FIAF), and 61–81 (IFVF…LAIL).

This sequence belongs to the complex I subunit 4L family. As to quaternary structure, NDH-1 is composed of 14 different subunits. Subunits NuoA, H, J, K, L, M, N constitute the membrane sector of the complex.

It is found in the cell inner membrane. The enzyme catalyses a quinone + NADH + 5 H(+)(in) = a quinol + NAD(+) + 4 H(+)(out). In terms of biological role, NDH-1 shuttles electrons from NADH, via FMN and iron-sulfur (Fe-S) centers, to quinones in the respiratory chain. The immediate electron acceptor for the enzyme in this species is believed to be ubiquinone. Couples the redox reaction to proton translocation (for every two electrons transferred, four hydrogen ions are translocated across the cytoplasmic membrane), and thus conserves the redox energy in a proton gradient. This is NADH-quinone oxidoreductase subunit K from Laribacter hongkongensis (strain HLHK9).